Here is a 122-residue protein sequence, read N- to C-terminus: U1 small nuclear ribonucleoprotein C (122 aa).

The segment at 4–36 adopts a Matrin-type zinc-finger fold; sequence YFCDYCDTYLTHDSPSVRKTHCSGRKHKDNVKM.

The protein belongs to the U1 small nuclear ribonucleoprotein C family. In terms of assembly, U1 snRNP is composed of the 7 core Sm proteins B/B', D1, D2, D3, E, F and G that assemble in a heptameric protein ring on the Sm site of the small nuclear RNA to form the core snRNP, and at least 3 U1 snRNP-specific proteins U1-70K, U1-A and U1-C. U1-C interacts with U1 snRNA and the 5' splice-site region of the pre-mRNA.

It localises to the nucleus. Its function is as follows. Component of the spliceosomal U1 snRNP, which is essential for recognition of the pre-mRNA 5' splice-site and the subsequent assembly of the spliceosome. U1-C is directly involved in initial 5' splice-site recognition for both constitutive and regulated alternative splicing. The interaction with the 5' splice-site seems to precede base-pairing between the pre-mRNA and the U1 snRNA. Stimulates commitment or early (E) complex formation by stabilizing the base pairing of the 5' end of the U1 snRNA and the 5' splice-site region. This chain is U1 small nuclear ribonucleoprotein C, found in Ciona intestinalis (Transparent sea squirt).